A 424-amino-acid chain; its full sequence is Imidazolonepropionase (424 aa).

Fe(3+) is bound by residues His-85 and His-87. Positions 85 and 87 each coordinate Zn(2+). Arg-94, Tyr-157, and His-190 together coordinate 4-imidazolone-5-propanoate. Residue Tyr-157 coordinates N-formimidoyl-L-glutamate. His-255 is a binding site for Fe(3+). His-255 serves as a coordination point for Zn(2+). Position 258 (Glu-258) interacts with 4-imidazolone-5-propanoate. Asp-329 lines the Fe(3+) pocket. Asp-329 provides a ligand contact to Zn(2+). Positions 331 and 333 each coordinate N-formimidoyl-L-glutamate. Ser-334 is a 4-imidazolone-5-propanoate binding site.

The protein belongs to the metallo-dependent hydrolases superfamily. HutI family. The cofactor is Zn(2+). It depends on Fe(3+) as a cofactor.

The protein resides in the cytoplasm. It carries out the reaction 4-imidazolone-5-propanoate + H2O = N-formimidoyl-L-glutamate. Its pathway is amino-acid degradation; L-histidine degradation into L-glutamate; N-formimidoyl-L-glutamate from L-histidine: step 3/3. In terms of biological role, catalyzes the hydrolytic cleavage of the carbon-nitrogen bond in imidazolone-5-propanoate to yield N-formimidoyl-L-glutamate. It is the third step in the universal histidine degradation pathway. The protein is Imidazolonepropionase of Brevibacillus brevis (strain 47 / JCM 6285 / NBRC 100599).